Consider the following 81-residue polypeptide: UPF0386 protein Smed_0945 (81 aa).

This sequence belongs to the UPF0386 family.

The polypeptide is UPF0386 protein Smed_0945 (Sinorhizobium medicae (strain WSM419) (Ensifer medicae)).